A 618-amino-acid chain; its full sequence is DNA mismatch repair protein MutL (618 aa).

The segment covering 367-381 (EPTAAREPATPRYSG) has biased composition (low complexity). A disordered region spans residues 367-402 (EPTAAREPATPRYSGGASGGNGGRQSAGGWPHAQPG). Positions 382–392 (GASGGNGGRQS) are enriched in gly residues.

It belongs to the DNA mismatch repair MutL/HexB family.

In terms of biological role, this protein is involved in the repair of mismatches in DNA. It is required for dam-dependent methyl-directed DNA mismatch repair. May act as a 'molecular matchmaker', a protein that promotes the formation of a stable complex between two or more DNA-binding proteins in an ATP-dependent manner without itself being part of a final effector complex. The polypeptide is DNA mismatch repair protein MutL (Salmonella heidelberg (strain SL476)).